We begin with the raw amino-acid sequence, 319 residues long: ATP-dependent 6-phosphofructokinase (319 aa).

G11 contacts ATP. 21–25 (RAVVR) serves as a coordination point for ADP. ATP-binding positions include 72 to 73 (RY) and 102 to 105 (GDGS). Position 103 (D103) interacts with Mg(2+). 125–127 (TID) is a binding site for substrate. Catalysis depends on D127, which acts as the Proton acceptor. R154 provides a ligand contact to ADP. Substrate contacts are provided by residues R162 and 169 to 171 (MGR). Residues 185–187 (GAE), R211, and 213–215 (KKH) contribute to the ADP site. Substrate is bound by residues E222, R243, and 249–252 (HVQR).

It belongs to the phosphofructokinase type A (PFKA) family. ATP-dependent PFK group I subfamily. Prokaryotic clade 'B1' sub-subfamily. As to quaternary structure, homotetramer. The cofactor is Mg(2+).

Its subcellular location is the cytoplasm. It catalyses the reaction beta-D-fructose 6-phosphate + ATP = beta-D-fructose 1,6-bisphosphate + ADP + H(+). The protein operates within carbohydrate degradation; glycolysis; D-glyceraldehyde 3-phosphate and glycerone phosphate from D-glucose: step 3/4. Allosterically activated by ADP and other diphosphonucleosides, and allosterically inhibited by phosphoenolpyruvate. In terms of biological role, catalyzes the phosphorylation of D-fructose 6-phosphate to fructose 1,6-bisphosphate by ATP, the first committing step of glycolysis. The protein is ATP-dependent 6-phosphofructokinase of Listeria monocytogenes serotype 4b (strain CLIP80459).